The chain runs to 410 residues: Chlorobenzene dioxygenase, ferredoxin reductase component (410 aa).

4–35 (HVAIIGNGVAGFTTAQALRAEGFEGRISLIGN) lines the FAD pocket. Residue 145–173 (RLVIAGGGLIGCEVATTARKLGLAVTILE) coordinates NAD(+).

Belongs to the bacterial ring-hydroxylating dioxygenase ferredoxin reductase family. As to quaternary structure, this dioxygenase system consists of four proteins: the two subunits of the oxygenase component (TecA1 and TecA2), a ferredoxin (TecA3) and a ferredoxin reductase (TecA4). FAD is required as a cofactor.

It catalyses the reaction 2 reduced [2Fe-2S]-[ferredoxin] + NAD(+) + H(+) = 2 oxidized [2Fe-2S]-[ferredoxin] + NADH. It functions in the pathway aromatic compound metabolism. Part of the chlorobenzene dioxygenase system that catalyzes the dihydroxylation of a range of aromatic compounds, including chlorinated benzenes and toluenes, and dinuclear aromatics such as biphenyl and dibenzo-p-dioxin. The protein is Chlorobenzene dioxygenase, ferredoxin reductase component of Cupriavidus sp. (strain PS12).